Reading from the N-terminus, the 303-residue chain is DCN1-like protein 3 (303 aa).

Residues 1–40 (MGQCVTKCKNPSSTLGSKNGERESSKPHKRSSSHKEEHMS) form a disordered region. A lipid anchor (N-myristoyl glycine) is attached at G2. The DCUN1 domain occupies 85–277 (SSLQRIEELF…LFDTFVEWEM (193 aa)).

In terms of assembly, may interact (via the DCUN1 domain) with unneddylated cullins.

Its subcellular location is the cell membrane. The protein localises to the cytoplasm. It is found in the nucleus. The protein resides in the perinuclear region. In terms of biological role, contributes to the neddylation of all cullins by transferring NEDD8 from N-terminally acetylated NEDD8-conjugating E2s enzyme to different cullin C-terminal domain-RBX complexes. At the cell membrane, can promote and as well inhibit cullins neddylation. The chain is DCN1-like protein 3 from Xenopus laevis (African clawed frog).